The chain runs to 51 residues: Large ribosomal subunit protein eL39 (51 aa).

It belongs to the eukaryotic ribosomal protein eL39 family.

This Pyrococcus abyssi (strain GE5 / Orsay) protein is Large ribosomal subunit protein eL39 (rpl39e).